Reading from the N-terminus, the 389-residue chain is Serpin-Z3 (389 aa).

Positions Gly337–Ala361 are RCL.

The protein belongs to the serpin family.

Its function is as follows. Probable serine protease inhibitor. The chain is Serpin-Z3 from Arabidopsis thaliana (Mouse-ear cress).